Here is a 521-residue protein sequence, read N- to C-terminus: Cytochrome P450 52A9 (521 aa).

Residue cysteine 468 participates in heme binding.

This sequence belongs to the cytochrome P450 family. The cofactor is heme.

It is found in the membrane. In terms of biological role, together with an NADPH cytochrome P450 the enzyme system catalyzes the terminal hydroxylation as the first step in the assimilation of alkanes and fatty acids. The protein is Cytochrome P450 52A9 (CYP52A9) of Candida maltosa (Yeast).